We begin with the raw amino-acid sequence, 212 residues long: MLHHPGTGQLRALKGTTTVGIVFRDFVVLAADRRATAGYFVAHKRTKKIIKITDYMAMTTAGLVADAQMLAEWLANHTHYYEIVNKRRMSIHAAAQYLSIILHSAKFYPYIVQLLLGGYDTQPRLYNIDWFGSVTEEKYVATGSGSPTAIGVIEDQYSPNLSMEEAVELAKRAVASSIRRDTFTGNGVDVVVIGKDFYREYSFELKDILKTK.

Positions 1–15 (MLHHPGTGQLRALKG) are cleaved as a propeptide — removed in mature form; by autocatalysis. Thr-16 acts as the Nucleophile in catalysis.

The protein belongs to the peptidase T1B family. As to quaternary structure, the 20S proteasome core is composed of 14 alpha and 14 beta subunits that assemble into four stacked heptameric rings, resulting in a barrel-shaped structure. The two inner rings, each composed of seven catalytic beta subunits, are sandwiched by two outer rings, each composed of seven alpha subunits. The catalytic chamber with the active sites is on the inside of the barrel. Has a gated structure, the ends of the cylinder being occluded by the N-termini of the alpha-subunits. Is capped at one or both ends by the proteasome regulatory ATPase, PAN.

The protein localises to the cytoplasm. It carries out the reaction Cleavage of peptide bonds with very broad specificity.. With respect to regulation, the formation of the proteasomal ATPase PAN-20S proteasome complex, via the docking of the C-termini of PAN into the intersubunit pockets in the alpha-rings, triggers opening of the gate for substrate entry. Interconversion between the open-gate and close-gate conformations leads to a dynamic regulation of the 20S proteasome proteolysis activity. Component of the proteasome core, a large protease complex with broad specificity involved in protein degradation. The chain is Proteasome subunit beta 2 from Hyperthermus butylicus (strain DSM 5456 / JCM 9403 / PLM1-5).